A 633-amino-acid chain; its full sequence is DNA topoisomerase 4 subunit B (633 aa).

ATP contacts are provided by residues Tyr5, Asn45, Asp72, 113–119 (GLHGVGA), and Lys337. The region spanning 419–534 (KELFIVEGDS…LGHVYLALPP (116 aa)) is the Toprim domain. The Mg(2+) site is built by Glu425, Asp499, and Asp501.

Belongs to the type II topoisomerase family. ParE type 2 subfamily. In terms of assembly, heterotetramer composed of ParC and ParE. The cofactor is Mg(2+). Requires Mn(2+) as cofactor. Ca(2+) is required as a cofactor.

The enzyme catalyses ATP-dependent breakage, passage and rejoining of double-stranded DNA.. Its function is as follows. Topoisomerase IV is essential for chromosome segregation. It relaxes supercoiled DNA. Performs the decatenation events required during the replication of a circular DNA molecule. The polypeptide is DNA topoisomerase 4 subunit B (Mycoplasma genitalium (strain ATCC 33530 / DSM 19775 / NCTC 10195 / G37) (Mycoplasmoides genitalium)).